The following is a 544-amino-acid chain: Chaperonin GroEL (544 aa).

ATP is bound by residues Thr-30–Pro-33, Lys-51, Asp-87–Thr-91, Gly-415, and Asp-495.

This sequence belongs to the chaperonin (HSP60) family. Forms a cylinder of 14 subunits composed of two heptameric rings stacked back-to-back. Interacts with the co-chaperonin GroES.

It is found in the cytoplasm. The catalysed reaction is ATP + H2O + a folded polypeptide = ADP + phosphate + an unfolded polypeptide.. Together with its co-chaperonin GroES, plays an essential role in assisting protein folding. The GroEL-GroES system forms a nano-cage that allows encapsulation of the non-native substrate proteins and provides a physical environment optimized to promote and accelerate protein folding. The sequence is that of Chaperonin GroEL from Neisseria flavescens.